Here is a 586-residue protein sequence, read N- to C-terminus: Aspartate--tRNA(Asp/Asn) ligase (586 aa).

Residue Glu-172 coordinates L-aspartate. Residues Gln-196 to Lys-199 are aspartate. Arg-218 contributes to the L-aspartate binding site. ATP contacts are provided by residues Arg-218–Glu-220 and Gln-227. His-446 is a binding site for L-aspartate. Glu-480 is a binding site for ATP. An L-aspartate-binding site is contributed by Arg-487. Position 532 to 535 (Gly-532 to Arg-535) interacts with ATP.

This sequence belongs to the class-II aminoacyl-tRNA synthetase family. Type 1 subfamily. As to quaternary structure, homodimer.

The protein localises to the cytoplasm. The enzyme catalyses tRNA(Asx) + L-aspartate + ATP = L-aspartyl-tRNA(Asx) + AMP + diphosphate. Its function is as follows. Aspartyl-tRNA synthetase with relaxed tRNA specificity since it is able to aspartylate not only its cognate tRNA(Asp) but also tRNA(Asn). Reaction proceeds in two steps: L-aspartate is first activated by ATP to form Asp-AMP and then transferred to the acceptor end of tRNA(Asp/Asn). The polypeptide is Aspartate--tRNA(Asp/Asn) ligase (Borrelia garinii subsp. bavariensis (strain ATCC BAA-2496 / DSM 23469 / PBi) (Borreliella bavariensis)).